The primary structure comprises 283 residues: Protein/nucleic acid deglycase HchA (283 aa).

Residues H86, E91, and H123 each contribute to the Zn(2+) site. Residue C185 is the Nucleophile of the active site.

Belongs to the peptidase C56 family. HchA subfamily. Homodimer.

The protein localises to the cytoplasm. It carries out the reaction N(omega)-(1-hydroxy-2-oxopropyl)-L-arginyl-[protein] + H2O = lactate + L-arginyl-[protein] + H(+). The catalysed reaction is N(6)-(1-hydroxy-2-oxopropyl)-L-lysyl-[protein] + H2O = lactate + L-lysyl-[protein] + H(+). It catalyses the reaction S-(1-hydroxy-2-oxopropyl)-L-cysteinyl-[protein] + H2O = lactate + L-cysteinyl-[protein] + H(+). The enzyme catalyses N(omega)-(1-hydroxy-2-oxoethyl)-L-arginyl-[protein] + H2O = L-arginyl-[protein] + glycolate + H(+). It carries out the reaction N(6)-(1-hydroxy-2-oxoethyl)-L-lysyl-[protein] + H2O = glycolate + L-lysyl-[protein] + H(+). The catalysed reaction is S-(1-hydroxy-2-oxoethyl)-L-cysteinyl-[protein] + H2O = glycolate + L-cysteinyl-[protein] + H(+). It catalyses the reaction N(2)-(1-hydroxy-2-oxopropyl)-dGTP + H2O = lactate + dGTP + H(+). The enzyme catalyses N(2)-(1-hydroxy-2-oxopropyl)-GTP + H2O = lactate + GTP + H(+). It carries out the reaction N(2)-(1-hydroxy-2-oxopropyl)-GDP + H2O = lactate + GDP + H(+). The catalysed reaction is N(2)-(1-hydroxy-2-oxopropyl)-GMP + H2O = lactate + GMP + H(+). It catalyses the reaction N(2)-(1-hydroxy-2-oxoethyl)-dGTP + H2O = dGTP + glycolate + H(+). The enzyme catalyses N(2)-(1-hydroxy-2-oxoethyl)-GTP + H2O = glycolate + GTP + H(+). It carries out the reaction N(2)-(1-hydroxy-2-oxoethyl)-GDP + H2O = glycolate + GDP + H(+). The catalysed reaction is N(2)-(1-hydroxy-2-oxoethyl)-GMP + H2O = glycolate + GMP + H(+). It catalyses the reaction an N(2)-(1-hydroxy-2-oxopropyl)-guanosine in RNA + H2O = a guanosine in RNA + lactate + H(+). The enzyme catalyses an N(2)-(1-hydroxy-2-oxopropyl)-2'-deoxyguanosine in DNA + H2O = a 2'-deoxyguanosine in DNA + lactate + H(+). It carries out the reaction an N(2)-(1-hydroxy-2-oxoethyl)-guanosine in RNA + H2O = a guanosine in RNA + glycolate + H(+). The catalysed reaction is an N(2)-(1-hydroxy-2-oxoethyl)-2'-deoxyguanosine in DNA + H2O = a 2'-deoxyguanosine in DNA + glycolate + H(+). Protein and nucleotide deglycase that catalyzes the deglycation of the Maillard adducts formed between amino groups of proteins or nucleotides and reactive carbonyl groups of glyoxals. Thus, functions as a protein deglycase that repairs methylglyoxal- and glyoxal-glycated proteins, and releases repaired proteins and lactate or glycolate, respectively. Deglycates cysteine, arginine and lysine residues in proteins, and thus reactivates these proteins by reversing glycation by glyoxals. Acts on early glycation intermediates (hemithioacetals and aminocarbinols), preventing the formation of Schiff bases and advanced glycation endproducts (AGE). Also functions as a nucleotide deglycase able to repair glycated guanine in the free nucleotide pool (GTP, GDP, GMP, dGTP) and in DNA and RNA. Is thus involved in a major nucleotide repair system named guanine glycation repair (GG repair), dedicated to reversing methylglyoxal and glyoxal damage via nucleotide sanitization and direct nucleic acid repair. Plays an important role in protecting cells from carbonyl stress. This Escherichia coli (strain K12 / MC4100 / BW2952) protein is Protein/nucleic acid deglycase HchA.